The following is a 512-amino-acid chain: Perphorin-1 (512 aa).

A signal peptide spans 1–18; that stretch reads MMRKALLALCVATAFAVA. N-linked (GlcNAc...) asparagine glycans are attached at residues Asn-49, Asn-96, Asn-118, Asn-378, Asn-381, Asn-403, and Asn-476.

It is found in the secreted. It localises to the extracellular space. The protein resides in the extracellular matrix. In terms of biological role, may be involved in conversion of asexual males and females to the sexual pathway. The chain is Perphorin-1 from Volvox carteri (Green alga).